Consider the following 869-residue polypeptide: Nitrogen permease regulator 3 (869 aa).

Residues 1–23 form the signal peptide; that stretch reads MSSIARPPDPCLVAIILIVRSRA. Disordered regions lie at residues 31–180, 228–275, 662–702, and 842–869; these read YPPN…RPPW, WRKQ…PDRG, KRGS…GRYK, and KTISPNPASSHVMTPRHTDGRNGTTPTN. The segment covering 45–55 has biased composition (basic residues); the sequence is PKARRPSRKNS. Composition is skewed to low complexity over residues 57–70 and 80–102; these read SNESSSSEDSSSTS and TATAAAPATTGTATQPANATQNA. A compositionally biased stretch (polar residues) spans 115–129; the sequence is RSSNFGVVDDTTISG. The span at 229–239 shows a compositional bias: basic residues; it reads RKQRRKKRKPR. Over residues 254–271 the composition is skewed to acidic residues; the sequence is GDGDGDGEGDEAGTEDDS. A compositionally biased stretch (low complexity) spans 679-692; sequence SSSSSSSLGSNGSG. Over residues 842-853 the composition is skewed to polar residues; it reads KTISPNPASSHV.

It belongs to the NPR3 family.

Mediates inactivation of the TORC1 complex in response to amino acid starvation. Required for meiotic nuclear division. The protein is Nitrogen permease regulator 3 (npr3) of Aspergillus niger (strain ATCC MYA-4892 / CBS 513.88 / FGSC A1513).